Consider the following 411-residue polypeptide: Serine/threonine transporter SstT (411 aa).

9 helical membrane-spanning segments follow: residues 14-34, 43-63, 82-102, 141-161, 192-212, 218-238, 290-310, 330-350, and 357-377; these read GSLV…ASVA, FLGG…VFIL, IIML…VMSF, ALMS…GFAL, IGIF…ALAG, AVLL…IVFF, IPLG…VLTL, VVAA…LLLI, and FGIP…IGVI.

It belongs to the dicarboxylate/amino acid:cation symporter (DAACS) (TC 2.A.23) family.

It is found in the cell inner membrane. It carries out the reaction L-serine(in) + Na(+)(in) = L-serine(out) + Na(+)(out). The enzyme catalyses L-threonine(in) + Na(+)(in) = L-threonine(out) + Na(+)(out). Its function is as follows. Involved in the import of serine and threonine into the cell, with the concomitant import of sodium (symport system). The protein is Serine/threonine transporter SstT of Photobacterium profundum (strain SS9).